The following is a 460-amino-acid chain: Probable elastin-binding protein EbpS (460 aa).

Basic and acidic residues predominate over residues 1 to 40; that stretch reads MSNNNFKDDFEKNRQSINPDEHQTELKEDDKTNENKKEAD. Residues 1–277 form a disordered region; sequence MSNNNFKDDF…NQYNDQSEGK (277 aa). Positions 41–57 are enriched in low complexity; that stretch reads SQNSLSNNSNQQFPPRN. Residues 74 to 128 are compositionally biased toward basic and acidic residues; sequence QQDDKHQKNSDAKTTEGSLDDRYDEAQLQQQHDKSQQQNKTEKQSQDNRMKDGKD. Positions 177–192 are enriched in low complexity; sequence ATGAGIAGAAGVAGAA. Over residues 203–226 the composition is skewed to basic and acidic residues; that stretch reads DKQDSKHSNHENDEKSVKNDDQKQ. The segment covering 264–273 has biased composition (low complexity); the sequence is SNQNNQYNDQ. Residues 285–305 form a helical membrane-spanning segment; that stretch reads ILLPLIAAILILGAIAIFGGM. The segment covering 313 to 359 has biased composition (basic and acidic residues); that stretch reads SKSDDQKIANQSKKDSDKKDGAQSEDNKDKKSDSNKDKKSDSDKNAD. A disordered region spans residues 313–411; that stretch reads SKSDDQKIAN…NQQATQGQQS (99 aa). Over residues 364 to 411 the composition is skewed to low complexity; the sequence is NSSSNPNATSTNNNDNVANNNSNYTNQNQQDNANQNSNNQQATQGQQS. In terms of domain architecture, LysM spans 410 to 458; sequence QSHTVYGQENLYRIAIQYYGEGTQANVDKIKRANGLSSNNIHNGQTLVI.

The protein localises to the cell membrane. This chain is Probable elastin-binding protein EbpS (ebpS), found in Staphylococcus epidermidis (strain ATCC 35984 / DSM 28319 / BCRC 17069 / CCUG 31568 / BM 3577 / RP62A).